The primary structure comprises 825 residues: Probable phosphoketolase (825 aa).

Belongs to the XFP family. It depends on thiamine diphosphate as a cofactor.

The chain is Probable phosphoketolase from Bifidobacterium animalis subsp. lactis (strain AD011).